The primary structure comprises 282 residues: Transcription factor BC1 (282 aa).

Residues 34–123 (TTAPAIPEDA…ATDSHSLAER (90 aa)) are disordered. A compositionally biased stretch (polar residues) spans 45–55 (METSSVVLDTS). Basic and acidic residues predominate over residues 75–84 (HSKEAKENGR). Positions 109–116 (ARRGQATD) match the Nuclear localization signal motif. Residues 113 to 126 (QATDSHSLAERVRR) are basic motif; degenerate. Positions 113–163 (QATDSHSLAERVRRERISERMRMLQALVPGCDKVTGKALILDEIINYVQSL) constitute a bHLH domain. The tract at residues 127 to 163 (ERISERMRMLQALVPGCDKVTGKALILDEIINYVQSL) is helix-loop-helix motif. Positions 219–251 (PAQSHAIMDTSNTSPTPYTLQVQGGSNNNSLSQ) are disordered.

Belongs to the bHLH protein family. Homodimer. Component of a nuclear cell elongation controlling complex made of ILI5/BUL1, LO9-177 and BC1. Interacts with ILI5/BUL1 only in the presence of LO9-177. Interacts with IBH1. Binds to LO9-177 in the nucleus. Interacts with BCL1. Preferentially present in anthers and leaves lamina joints. Expressed in seedlings, leaves sheaths, collars and panicles.

It is found in the nucleus. Functionally, transcription activator that contributes, together with LO9-177 and ILI5/BUL1, to the promotion of leaf inclination and grain size by modulating cell elongation. Involved in the RLI1-dependent modulation of leaf inclination by promoting lamina joint cell elongation, especially in response to phosphate (Pi) availability. The protein is Transcription factor BC1 of Oryza sativa subsp. japonica (Rice).